We begin with the raw amino-acid sequence, 269 residues long: Sororin (269 aa).

Disordered stretches follow at residues 1–39, 56–110, and 146–169; these read MSEGKKRSRGGLAIISPPKRRSQRKSTSDSPIPEPIMKR, VNTG…PKIN, and SLNSSSSLYSPTRKTDSSDTSTPN. Residues 57 to 66 are compositionally biased toward polar residues; that stretch reads NTGSQSTPKV. The KEN box motif lies at 85-87; that stretch reads KEN. Positions 146 to 155 are enriched in low complexity; it reads SLNSSSSLYS. The FGF motif motif lies at 180–182; it reads FGF. The tract at residues 247-269 is C-terminal Sororin domain; that stretch reads LDEWAAFMNAEFEEAEKFDLTVE.

Belongs to the sororin family. Interacts with the APC/C complex. Interacts with the chromatin-bound cohesin complex; the interaction is indirect, occurs after DNA replication and requires acetylation of the cohesin component smc3. Interacts (via the FGF motif) with pds5a and pds5b; the interaction is direct and prevents the interaction of pds5a with wapl. Ubiquitinated by the APC/C complex in G1, leading to its degradation.

It is found in the nucleus. It localises to the chromosome. Its subcellular location is the cytoplasm. Regulator of sister chromatid cohesion in mitosis stabilizing cohesin complex association with chromatin. May antagonize the action of wapl which stimulates cohesin dissociation from chromatin. Cohesion ensures that chromosome partitioning is accurate in both meiotic and mitotic cells and plays an important role in DNA repair. Required for efficient DNA double-stranded break repair. This is Sororin (cdca5-a) from Xenopus laevis (African clawed frog).